Consider the following 236-residue polypeptide: 2,3,4,5-tetrahydropyridine-2,6-dicarboxylate N-acetyltransferase (236 aa).

It belongs to the transferase hexapeptide repeat family. DapH subfamily.

It catalyses the reaction (S)-2,3,4,5-tetrahydrodipicolinate + acetyl-CoA + H2O = L-2-acetamido-6-oxoheptanedioate + CoA. The protein operates within amino-acid biosynthesis; L-lysine biosynthesis via DAP pathway; LL-2,6-diaminopimelate from (S)-tetrahydrodipicolinate (acetylase route): step 1/3. Catalyzes the transfer of an acetyl group from acetyl-CoA to tetrahydrodipicolinate. The chain is 2,3,4,5-tetrahydropyridine-2,6-dicarboxylate N-acetyltransferase from Bacillus licheniformis (strain ATCC 14580 / DSM 13 / JCM 2505 / CCUG 7422 / NBRC 12200 / NCIMB 9375 / NCTC 10341 / NRRL NRS-1264 / Gibson 46).